Reading from the N-terminus, the 574-residue chain is Cholinesterase (574 aa).

N-linked (GlcNAc...) asparagine glycosylation occurs at Asn57. Cys65 and Cys92 are joined by a disulfide. An N-linked (GlcNAc...) asparagine glycan is attached at Asn106. Residue 116–117 (GG) coordinates substrate. Ser198 (acyl-ester intermediate) is an active-site residue. Position 198 is a phosphoserine (Ser198). 2 N-linked (GlcNAc...) asparagine glycosylation sites follow: Asn241 and Asn256. Cys252 and Cys263 are joined by a disulfide. Catalysis depends on Glu325, which acts as the Charge relay system. Residue Asn341 is glycosylated (N-linked (GlcNAc...) asparagine). An intrachain disulfide couples Cys400 to Cys519. His438 acts as the Charge relay system in catalysis. N-linked (GlcNAc...) asparagine glycans are attached at residues Asn455, Asn481, and Asn486.

Belongs to the type-B carboxylesterase/lipase family. In terms of assembly, homotetramer; disulfide-linked. Dimer of dimers. In terms of tissue distribution, detected in blood plasma (at protein level). Present in most cells except erythrocytes.

It localises to the secreted. It catalyses the reaction an acylcholine + H2O = a carboxylate + choline + H(+). Functionally, esterase with broad substrate specificity. Contributes to the inactivation of the neurotransmitter acetylcholine. Can degrade neurotoxic organophosphate esters. The polypeptide is Cholinesterase (BCHE) (Equus caballus (Horse)).